Consider the following 327-residue polypeptide: Transaldolase (327 aa).

The active-site Schiff-base intermediate with substrate is the Lys-132.

The protein belongs to the transaldolase family. Type 1 subfamily.

Its subcellular location is the cytoplasm. The enzyme catalyses D-sedoheptulose 7-phosphate + D-glyceraldehyde 3-phosphate = D-erythrose 4-phosphate + beta-D-fructose 6-phosphate. It participates in carbohydrate degradation; pentose phosphate pathway; D-glyceraldehyde 3-phosphate and beta-D-fructose 6-phosphate from D-ribose 5-phosphate and D-xylulose 5-phosphate (non-oxidative stage): step 2/3. Transaldolase is important for the balance of metabolites in the pentose-phosphate pathway. This chain is Transaldolase, found in Chlamydia pneumoniae (Chlamydophila pneumoniae).